We begin with the raw amino-acid sequence, 555 residues long: CTP synthase (555 aa).

An amidoligase domain region spans residues 1 to 265 (MTRYIFITGG…GNRVCEKLNI (265 aa)). S13 is a CTP binding site. Residue S13 participates in UTP binding. ATP-binding positions include 14–19 (SLGKGI) and D71. D71 and E139 together coordinate Mg(2+). CTP is bound by residues 146 to 148 (DIE), 186 to 191 (KTKPTQ), and K222. Residues 186–191 (KTKPTQ) and K222 each bind UTP. The Glutamine amidotransferase type-1 domain occupies 290 to 541 (TVAVVGKYVD…IKAGLAAKEA (252 aa)). Position 351 (G351) interacts with L-glutamine. C378 acts as the Nucleophile; for glutamine hydrolysis in catalysis. Residues 379–382 (LGMQ), E402, and R469 each bind L-glutamine. Catalysis depends on residues H514 and E516.

This sequence belongs to the CTP synthase family. In terms of assembly, homotetramer.

The enzyme catalyses UTP + L-glutamine + ATP + H2O = CTP + L-glutamate + ADP + phosphate + 2 H(+). It carries out the reaction L-glutamine + H2O = L-glutamate + NH4(+). The catalysed reaction is UTP + NH4(+) + ATP = CTP + ADP + phosphate + 2 H(+). Its pathway is pyrimidine metabolism; CTP biosynthesis via de novo pathway; CTP from UDP: step 2/2. Allosterically activated by GTP, when glutamine is the substrate; GTP has no effect on the reaction when ammonia is the substrate. The allosteric effector GTP functions by stabilizing the protein conformation that binds the tetrahedral intermediate(s) formed during glutamine hydrolysis. Inhibited by the product CTP, via allosteric rather than competitive inhibition. Functionally, catalyzes the ATP-dependent amination of UTP to CTP with either L-glutamine or ammonia as the source of nitrogen. Regulates intracellular CTP levels through interactions with the four ribonucleotide triphosphates. The protein is CTP synthase of Coxiella burnetii (strain CbuK_Q154) (Coxiella burnetii (strain Q154)).